Consider the following 177-residue polypeptide: Endoribonuclease YbeY (177 aa).

Residues H118, H122, and H128 each contribute to the Zn(2+) site.

Belongs to the endoribonuclease YbeY family. Zn(2+) is required as a cofactor.

Its subcellular location is the cytoplasm. Functionally, single strand-specific metallo-endoribonuclease involved in late-stage 70S ribosome quality control and in maturation of the 3' terminus of the 16S rRNA. The protein is Endoribonuclease YbeY of Mycobacterium sp. (strain JLS).